Reading from the N-terminus, the 642-residue chain is Threonine--tRNA ligase (642 aa).

One can recognise a TGS domain in the interval 1–61 (MPVITLPDGS…EHDAQIAIIT (61 aa)). Positions 243-534 (DHRKIGKQLD…LTEEYAGFYP (292 aa)) are catalytic. 3 residues coordinate Zn(2+): Cys-334, His-385, and His-511.

Belongs to the class-II aminoacyl-tRNA synthetase family. In terms of assembly, homodimer. Zn(2+) is required as a cofactor.

Its subcellular location is the cytoplasm. It carries out the reaction tRNA(Thr) + L-threonine + ATP = L-threonyl-tRNA(Thr) + AMP + diphosphate + H(+). Its function is as follows. Catalyzes the attachment of threonine to tRNA(Thr) in a two-step reaction: L-threonine is first activated by ATP to form Thr-AMP and then transferred to the acceptor end of tRNA(Thr). Also edits incorrectly charged L-seryl-tRNA(Thr). This chain is Threonine--tRNA ligase, found in Sodalis glossinidius (strain morsitans).